A 309-amino-acid chain; its full sequence is Probable manganese-dependent inorganic pyrophosphatase (309 aa).

His-9, Asp-13, Asp-15, Asp-75, His-97, and Asp-149 together coordinate Mn(2+).

Belongs to the PPase class C family. Mn(2+) is required as a cofactor.

It localises to the cytoplasm. It carries out the reaction diphosphate + H2O = 2 phosphate + H(+). The chain is Probable manganese-dependent inorganic pyrophosphatase from Staphylococcus saprophyticus subsp. saprophyticus (strain ATCC 15305 / DSM 20229 / NCIMB 8711 / NCTC 7292 / S-41).